Here is a 199-residue protein sequence, read N- to C-terminus: Large ribosomal subunit protein bL9 (199 aa).

Over residues 149-166 (AEAERINRGEDINSRQED) the composition is skewed to basic and acidic residues. Residues 149-199 (AEAERINRGEDINSRQEDQDAAAEAIAAAGEFFDPEAQDETPETEAASEQQ) form a disordered region. A compositionally biased stretch (acidic residues) spans 181–191 (FDPEAQDETPE).

Belongs to the bacterial ribosomal protein bL9 family.

Its function is as follows. Binds to the 23S rRNA. The protein is Large ribosomal subunit protein bL9 of Afipia carboxidovorans (strain ATCC 49405 / DSM 1227 / KCTC 32145 / OM5) (Oligotropha carboxidovorans).